The following is a 421-amino-acid chain: Tubulin gamma-3 chain (421 aa).

94–100 (AGGTGSG) contacts GTP.

Belongs to the tubulin family.

The protein localises to the cytoplasm. It localises to the cytoskeleton. It is found in the microtubule organizing center. Its function is as follows. Tubulin is the major constituent of microtubules. The gamma chain is found at microtubule organizing centers (MTOC) such as the spindle poles, suggesting that it is involved in the minus-end nucleation of microtubule assembly. The polypeptide is Tubulin gamma-3 chain (TUBG3) (Zea mays (Maize)).